The sequence spans 426 residues: Stationary phase-inducible protein CsiE (426 aa).

2 PRD domains span residues 120–225 and 229–336; these read ARNF…DPLR and QRDR…ENDL.

This chain is Stationary phase-inducible protein CsiE (csiE), found in Escherichia coli (strain K12).